We begin with the raw amino-acid sequence, 195 residues long: uncharacterized protein (195 aa).

Positions 1–17 (MKASLITAFVLPLLALA) are cleaved as a signal peptide. The N-linked (GlcNAc...) asparagine glycan is linked to N75.

The protein localises to the secreted. This is an uncharacterized protein from Arthroderma benhamiae (strain ATCC MYA-4681 / CBS 112371) (Trichophyton mentagrophytes).